A 391-amino-acid chain; its full sequence is Chorismate synthase (391 aa).

Arg-48 contributes to the NADP(+) binding site. FMN is bound by residues 126–128 (RSS), Gly-287, 302–306 (KPTSS), and Arg-329.

Belongs to the chorismate synthase family. The cofactor is FMNH2.

The enzyme catalyses 5-O-(1-carboxyvinyl)-3-phosphoshikimate = chorismate + phosphate. It participates in metabolic intermediate biosynthesis; chorismate biosynthesis; chorismate from D-erythrose 4-phosphate and phosphoenolpyruvate: step 7/7. Catalyzes the anti-1,4-elimination of the C-3 phosphate and the C-6 proR hydrogen from 5-enolpyruvylshikimate-3-phosphate (EPSP) to yield chorismate, which is the branch point compound that serves as the starting substrate for the three terminal pathways of aromatic amino acid biosynthesis. This reaction introduces a second double bond into the aromatic ring system. This is Chorismate synthase from Sulfolobus acidocaldarius (strain ATCC 33909 / DSM 639 / JCM 8929 / NBRC 15157 / NCIMB 11770).